The following is a 248-amino-acid chain: 3-deoxy-manno-octulosonate cytidylyltransferase (248 aa).

Belongs to the KdsB family.

It is found in the cytoplasm. It catalyses the reaction 3-deoxy-alpha-D-manno-oct-2-ulosonate + CTP = CMP-3-deoxy-beta-D-manno-octulosonate + diphosphate. It functions in the pathway nucleotide-sugar biosynthesis; CMP-3-deoxy-D-manno-octulosonate biosynthesis; CMP-3-deoxy-D-manno-octulosonate from 3-deoxy-D-manno-octulosonate and CTP: step 1/1. The protein operates within bacterial outer membrane biogenesis; lipopolysaccharide biosynthesis. Activates KDO (a required 8-carbon sugar) for incorporation into bacterial lipopolysaccharide in Gram-negative bacteria. The protein is 3-deoxy-manno-octulosonate cytidylyltransferase of Salmonella enteritidis PT4 (strain P125109).